Here is a 365-residue protein sequence, read N- to C-terminus: MTTKLIPAQQYHDIFIAGQPLIDLRAPIEFDRGAFPSSVNLPLMVDKEREKVGTCYKAQGQQAAIALGHSLVHGVVKQQRIDAWLNFLSANPEAYLYCFRGGLRSQLTQQWLQEAGVTAPYVQGGYKGMRQYLIGVIETAPSQQPLLSLSGMTGSGKTDFLRLRKEAIDLEGIANHRGSSFGKNIDPQPTQINFENQLAIALLRHQLGNHACLLLEDESFLIGRSALPQSFYSAMQTADIVVLEEDDDIRLTRLLDEYVHKMHLGFSERLGLEAGFEAFSHYLLQSLGSIRKRLGGKQYQELQDMMQQALSQQLNQNQTSQHMAWISLLLHKYYDPMYEYQLQKKAGNILFRGSHQAMHEWLDNY.

The 124-residue stretch at 15 to 138 (FIAGQPLIDL…MRQYLIGVIE (124 aa)) folds into the Rhodanese domain. Cysteine 98 (S-selanylcysteine intermediate) is an active-site residue.

This sequence belongs to the SelU family. As to quaternary structure, monomer.

It carries out the reaction 5-methylaminomethyl-2-thiouridine(34) in tRNA + selenophosphate + (2E)-geranyl diphosphate + H2O + H(+) = 5-methylaminomethyl-2-selenouridine(34) in tRNA + (2E)-thiogeraniol + phosphate + diphosphate. It catalyses the reaction 5-methylaminomethyl-2-thiouridine(34) in tRNA + (2E)-geranyl diphosphate = 5-methylaminomethyl-S-(2E)-geranyl-thiouridine(34) in tRNA + diphosphate. The enzyme catalyses 5-methylaminomethyl-S-(2E)-geranyl-thiouridine(34) in tRNA + selenophosphate + H(+) = 5-methylaminomethyl-2-(Se-phospho)selenouridine(34) in tRNA + (2E)-thiogeraniol. The catalysed reaction is 5-methylaminomethyl-2-(Se-phospho)selenouridine(34) in tRNA + H2O = 5-methylaminomethyl-2-selenouridine(34) in tRNA + phosphate. Functionally, involved in the post-transcriptional modification of the uridine at the wobble position (U34) of tRNA(Lys), tRNA(Glu) and tRNA(Gln). Catalyzes the conversion of 2-thiouridine (S2U-RNA) to 2-selenouridine (Se2U-RNA). Acts in a two-step process involving geranylation of 2-thiouridine (S2U) to S-geranyl-2-thiouridine (geS2U) and subsequent selenation of the latter derivative to 2-selenouridine (Se2U) in the tRNA chain. In Shewanella sp. (strain ANA-3), this protein is tRNA 2-selenouridine synthase.